The primary structure comprises 407 residues: MKRAFIMVLDSFGIGATEDAERFGDVGADTLGHIAEACAKGEADNGRKGPLNLPNLTRLGLAKAHEGSTGFIPAGMDGNAEVIGAYAWAHEMSSGKDTPSGHWEIAGVPVLFEWGYFSDHENSFPQELLDKLVERANLPGYLGNCHSSGTVILDQLGEEHMKTGKPIFYTSADSVFQIACHEETFGLDKLYKLCEIAREELTNGGYNIGRVIARPFIGDKAGNFQRTGNRHDLAVEPPAPTVLQKLVDEKHGQVVSVGKIADIYANCGITKKVKATGLDALFDATIKEMKEAGDNTIVFTNFVDFDSSWGHRRDVAGYAAGLELFDRRLPELMSLLRDDDILILTADHGCDPTWTGTDHTREHIPVLVYGPKVKPGSLGHRETFADIGQTLAKYFGTSDMEYGKAMF.

The Mn(2+) site is built by Asp10, Asp306, His311, Asp347, His348, and His359.

It belongs to the phosphopentomutase family. Requires Mn(2+) as cofactor.

The protein localises to the cytoplasm. The catalysed reaction is 2-deoxy-alpha-D-ribose 1-phosphate = 2-deoxy-D-ribose 5-phosphate. It catalyses the reaction alpha-D-ribose 1-phosphate = D-ribose 5-phosphate. Its pathway is carbohydrate degradation; 2-deoxy-D-ribose 1-phosphate degradation; D-glyceraldehyde 3-phosphate and acetaldehyde from 2-deoxy-alpha-D-ribose 1-phosphate: step 1/2. Isomerase that catalyzes the conversion of deoxy-ribose 1-phosphate (dRib-1-P) and ribose 1-phosphate (Rib-1-P) to deoxy-ribose 5-phosphate (dRib-5-P) and ribose 5-phosphate (Rib-5-P), respectively. In Escherichia coli O127:H6 (strain E2348/69 / EPEC), this protein is Phosphopentomutase.